A 480-amino-acid polypeptide reads, in one-letter code: Sialyltransferase-like protein 5 (480 aa).

Residues 1–17 are Cytoplasmic-facing; that stretch reads MARAPPPLSSLPPPPRR. A signal-anchor for type II membrane protein membrane pass occupies residues 18–38; the sequence is PTVVLLLGLALAFCLAVLSIQ. The Lumenal segment spans residues 39 to 480; sequence SSFFTAPRLA…VCVRHERSSS (442 aa). N98, N130, N165, and N321 each carry an N-linked (GlcNAc...) asparagine glycan.

It belongs to the glycosyltransferase 29 family.

It is found in the golgi apparatus membrane. In terms of biological role, may possess sialyltransferase-like activity in vitro. This chain is Sialyltransferase-like protein 5, found in Oryza sativa subsp. japonica (Rice).